We begin with the raw amino-acid sequence, 707 residues long: Ribosomal RNA large subunit methyltransferase K/L (707 aa).

A THUMP domain is found at 44-155 (VIYNLCLWSR…NDILTVSFDL (112 aa)).

Belongs to the methyltransferase superfamily. RlmKL family.

It localises to the cytoplasm. It carries out the reaction guanosine(2445) in 23S rRNA + S-adenosyl-L-methionine = N(2)-methylguanosine(2445) in 23S rRNA + S-adenosyl-L-homocysteine + H(+). The enzyme catalyses guanosine(2069) in 23S rRNA + S-adenosyl-L-methionine = N(2)-methylguanosine(2069) in 23S rRNA + S-adenosyl-L-homocysteine + H(+). Its function is as follows. Specifically methylates the guanine in position 2445 (m2G2445) and the guanine in position 2069 (m7G2069) of 23S rRNA. The protein is Ribosomal RNA large subunit methyltransferase K/L of Legionella pneumophila (strain Paris).